Here is a 505-residue protein sequence, read N- to C-terminus: Maturase K (505 aa).

It belongs to the intron maturase 2 family. MatK subfamily.

Its subcellular location is the plastid. The protein localises to the chloroplast. In terms of biological role, usually encoded in the trnK tRNA gene intron. Probably assists in splicing its own and other chloroplast group II introns. The chain is Maturase K from Chiococca alba (West Indian milkberry).